We begin with the raw amino-acid sequence, 120 residues long: Small ribosomal subunit protein uS13m (120 aa).

This sequence belongs to the universal ribosomal protein uS13 family. Part of the small ribosomal subunit.

The protein resides in the mitochondrion. In terms of biological role, located at the top of the head of the small subunit, it contacts several helices of the 18S rRNA. In Marchantia polymorpha (Common liverwort), this protein is Small ribosomal subunit protein uS13m (RPS13).